A 103-amino-acid chain; its full sequence is MRIKKGDSVLVTTGKDAGKKGKVLRVIPDKNRVVIEGVNRVKKHQKPSRSLPQGGILKIETPLNASNVMLVCSRCNKPTRIAHKIMENGEKVRICKQCGEALD.

It belongs to the universal ribosomal protein uL24 family. In terms of assembly, part of the 50S ribosomal subunit.

Functionally, one of two assembly initiator proteins, it binds directly to the 5'-end of the 23S rRNA, where it nucleates assembly of the 50S subunit. One of the proteins that surrounds the polypeptide exit tunnel on the outside of the subunit. The polypeptide is Large ribosomal subunit protein uL24 (Syntrophomonas wolfei subsp. wolfei (strain DSM 2245B / Goettingen)).